The following is a 302-amino-acid chain: Galactofuranosyltransferase GlfT1 (302 aa).

It belongs to the glycosyltransferase 2 family.

Its subcellular location is the cell membrane. It localises to the secreted. The protein resides in the cell wall. The catalysed reaction is alpha-L-rhamnosyl-(1-&gt;3)-N-acetyl-alpha-D-glucosaminyl-diphospho-trans,octa-cis-decaprenol + 2 UDP-alpha-D-galactofuranose = beta-D-galactofuranosyl-(1-&gt;5)-beta-D-galactofuranosyl-(1-&gt;4)-alpha-L-rhamnosyl-(1-&gt;3)-N-acetyl-alpha-D-glucosaminyl-diphospho-trans,octa-cis-decaprenol + 2 UDP + 2 H(+). Its pathway is cell wall biogenesis; cell wall polysaccharide biosynthesis. Functionally, involved in the biosynthesis of the arabinogalactan (AG) region of the mycolylarabinogalactan-peptidoglycan (mAGP) complex, an essential component of the mycobacterial cell wall. Catalyzes the transfer of the first two galactofuranosyl (Galf) units from UDP-galactofuranose (UDP-Galf) onto the rhamnosyl-GlcNAc-diphospho-decaprenol (Rha-GlcNAc-PP-C50) acceptor, yielding galactofuranosyl-galactofuranosyl-rhamnosyl-GlcNAc-diphospho-decaprenol (Galf-Galf-Rha-GlcNAc-PP-C50). Thus, GlfT1 is the initiator of galactan synthesis, while GlfT2 continues with the subsequent polymerization events. This Mycolicibacterium smegmatis (strain ATCC 700084 / mc(2)155) (Mycobacterium smegmatis) protein is Galactofuranosyltransferase GlfT1.